We begin with the raw amino-acid sequence, 288 residues long: ATP synthase gamma chain (288 aa).

This sequence belongs to the ATPase gamma chain family. F-type ATPases have 2 components, CF(1) - the catalytic core - and CF(0) - the membrane proton channel. CF(1) has five subunits: alpha(3), beta(3), gamma(1), delta(1), epsilon(1). CF(0) has three main subunits: a, b and c.

The protein resides in the cell membrane. Functionally, produces ATP from ADP in the presence of a proton gradient across the membrane. The gamma chain is believed to be important in regulating ATPase activity and the flow of protons through the CF(0) complex. The polypeptide is ATP synthase gamma chain (Shouchella clausii (strain KSM-K16) (Alkalihalobacillus clausii)).